The primary structure comprises 365 residues: D-alanine--D-alanine ligase (365 aa).

The region spanning 140–346 (KKILRRHGLQ…YSQLLTDLIY (207 aa)) is the ATP-grasp domain. Residue 173-228 (EKQLSYPIFVKPANLGSSVGISKVKNREELIQGIDLAVKYDMKCLAEEFIPGKEIE) participates in ATP binding. Residues aspartate 299, glutamate 313, and asparagine 315 each coordinate Mg(2+).

This sequence belongs to the D-alanine--D-alanine ligase family. The cofactor is Mg(2+). Mn(2+) is required as a cofactor.

It localises to the cytoplasm. The enzyme catalyses 2 D-alanine + ATP = D-alanyl-D-alanine + ADP + phosphate + H(+). Its pathway is cell wall biogenesis; peptidoglycan biosynthesis. Cell wall formation. This Natranaerobius thermophilus (strain ATCC BAA-1301 / DSM 18059 / JW/NM-WN-LF) protein is D-alanine--D-alanine ligase.